Reading from the N-terminus, the 100-residue chain is Tuberoinfundibular peptide of 39 residues (100 aa).

An N-terminal signal peptide occupies residues 1–30 (METCQMSRSPRERLLLLLLLLLLVPWGTGP). Positions 31–59 (ASGVALPLAGVFSLRAPGRAWAGLGSPLS) are excised as a propeptide.

Belongs to the parathyroid hormone family. Ligand of high affinity for the PTH2 receptor (PTH2R). In terms of tissue distribution, expressed in testis and, less abundantly, in liver and kidney. Expressed in seminiferous tubuli and several brain regions, including nucleus ruber, caudal paralemniscal nucleus, nucleus centralis pontis, and nucleus subparafascicularis thalami. Expressed in neurons of cerebral cortex and subcortical areas. Expressed in Purkinje cells of cerebellum.

The protein resides in the secreted. Plays a role as a potent and selective agonist of PTH2R resulting in adenyl cyclase activation and intracellular calcium levels elevation. Induces protein kinase C beta activation, recruitment of beta-arrestin and PTH2R internalization. May inhibit cell proliferation via its action of PTH2R activation. Neuropeptide which may also have a role in spermatogenesis. May activate nociceptors and nociceptive circuits. This is Tuberoinfundibular peptide of 39 residues (Pth2) from Mus musculus (Mouse).